The following is a 564-amino-acid chain: Acetylcholine receptor subunit alpha-type deg-3 (564 aa).

The signal sequence occupies residues 1–20; that stretch reads MTLKIRTIIILFCVISVTTT. The Extracellular portion of the chain corresponds to 21 to 268; it reads SQSLNATLKT…SLVIQRKPLY (248 aa). 4 N-linked (GlcNAc...) asparagine glycosylation sites follow: Asn-25, Asn-37, Asn-125, and Asn-198. 2 disulfide bridges follow: Cys-185–Cys-199 and Cys-248–Cys-249. 3 consecutive transmembrane segments (helical) span residues 269 to 289, 302 to 319, and 329 to 353; these read YLVN…TGFF, INLG…MLMV, and FVPL…LTSV. At 354–526 the chain is on the cytoplasmic side; it reads VLSVQGRRQY…WEFLATVLDR (173 aa). A helical membrane pass occupies residues 527–547; the sequence is FLLIVFVGAVVIVTAGLILVG.

This sequence belongs to the ligand-gated ion channel (TC 1.A.9) family. Acetylcholine receptor (TC 1.A.9.1) subfamily. The functional receptor is a heteromer of deg-3 and des-2. Interacts with ric-3; which is required for proper receptor folding.

The protein resides in the postsynaptic cell membrane. Its subcellular location is the cell membrane. Its function is as follows. Subunit of the non-synaptic neuronal acetylcholine receptor, which may play a role in chemotaxis towards choline. After binding choline or acetylcholine, the AChR responds by an extensive change in conformation that affects all subunits and leads to opening of an ion-conducting channel across the plasma membrane. This chain is Acetylcholine receptor subunit alpha-type deg-3 (deg-3), found in Caenorhabditis elegans.